Here is a 490-residue protein sequence, read N- to C-terminus: uncharacterized protein (490 aa).

A compositionally biased stretch (low complexity) spans Phe370 to Ser385. Positions Phe370 to Leu406 are disordered. Polar residues predominate over residues Glu391–Leu406.

Its subcellular location is the cytoplasm. The protein localises to the nucleus. This is an uncharacterized protein from Schizosaccharomyces pombe (strain 972 / ATCC 24843) (Fission yeast).